The following is a 476-amino-acid chain: MGMKIGNDPFHKRTATGIGDQFMRQAVRKAQDGLRVKKLKATESLGNWEEWRALGEEIRKHTLENLDYYLYELSENIEKNGGFVYFAKTAEDAREYVKEIVKKKNAKKIVKSKSMVTEEISLNEAIEEAGAEVLETDLAEFILQVNDHDPPSHIVVPCLHKDKEHICEIFKTKLNYTGTSDPTEMARFVRSYLRDDFFAADIGVTGCNFAVAESGSISIVANEGNARLTTTLPKTLITVMGMERIVPTWEELDVLVTLLCRSSVGQKLTSYITGLTEPGGTDGPEEFHLVIVDNGRSDIVGTEFQSVLQCIRCAACINVCPVYRHIGGHAYGSIYPGPIGAVLTPLLGGYDEYKDLPYASSLCGACTEACPVKIPLHDLLIKHRSRIVEEKQSPVAWNVAMKGFEKAVKSPRLFSFAAKSAPYALKPLAKGDKIERGIGPLKAWTDARDFPVPKKQPFREWFEKHVKENDDGHSKS.

2 consecutive 4Fe-4S ferredoxin-type domains span residues 301–331 and 350–379; these read GTEFQSVLQCIRCAACINVCPVYRHIGGHAY and YDEYKDLPYASSLCGACTEACPVKIPLHDL. Residues C310, C313, C316, C320, C363, C366, and C370 each contribute to the [4Fe-4S] cluster site.

The protein belongs to the LutB/YkgF family.

In terms of biological role, is involved in L-lactate degradation and allows cells to grow with lactate as the sole carbon source. Has probably a role as an electron transporter during oxidation of L-lactate. In Bacillus mycoides (strain KBAB4) (Bacillus weihenstephanensis), this protein is Lactate utilization protein B 1.